The sequence spans 29 residues: Small ribosomal subunit protein uS7 (29 aa).

Residues 1 to 29 (ELIGAANRDTKSFSINRKDAKERVAKAAR) are disordered. The segment covering 8–29 (RDTKSFSINRKDAKERVAKAAR) has biased composition (basic and acidic residues).

It belongs to the universal ribosomal protein uS7 family. In terms of assembly, part of the 30S ribosomal subunit.

Functionally, one of the primary rRNA binding proteins, it binds directly to 16S rRNA where it nucleates assembly of the head domain of the 30S subunit. Is located at the subunit interface close to the decoding center. This chain is Small ribosomal subunit protein uS7 (rps7), found in Methanosarcina thermophila.